Reading from the N-terminus, the 136-residue chain is Large-conductance mechanosensitive channel (136 aa).

The next 4 membrane-spanning stretches (helical) occupy residues 9 to 29 (AFASRGNVIDMAVGIIIGAAF), 32 to 52 (IVSSFVADIIMPPIGIILGGV), 54 to 74 (FSDLSVVLLAAQGDAPAVVIA), and 79 to 99 (IQTVIDFTIIAFAIFMGLKAI).

The protein belongs to the MscL family. Homopentamer.

Its subcellular location is the cell inner membrane. In terms of biological role, channel that opens in response to stretch forces in the membrane lipid bilayer. May participate in the regulation of osmotic pressure changes within the cell. This is Large-conductance mechanosensitive channel from Shewanella oneidensis (strain ATCC 700550 / JCM 31522 / CIP 106686 / LMG 19005 / NCIMB 14063 / MR-1).